The following is a 166-amino-acid chain: Gem-associated protein 6 (166 aa).

The 70-residue stretch at 4 to 73 (WMKKSPLEWE…VQTVETISEG (70 aa)) folds into the Sm domain. The AD domain occupies 68–166 (ETISEGDHRV…LIQGHLSASQ (99 aa)). Phosphoserine is present on residues S94 and S165.

As to quaternary structure, part of the core SMN complex that contains SMN1, GEMIN2/SIP1, DDX20/GEMIN3, GEMIN4, GEMIN5, GEMIN6, GEMIN7, GEMIN8 and STRAP/UNRIP. Part of the SMN-Sm complex that contains SMN1, GEMIN2/SIP1, DDX20/GEMIN3, GEMIN4, GEMIN5, GEMIN6, GEMIN7, GEMIN8, STRAP/UNRIP and the Sm proteins SNRPB, SNRPD1, SNRPD2, SNRPD3, SNRPE, SNRPF and SNRPG. Interacts with GEMIN7; the interaction is direct. Interacts with GEMIN8; the interaction is direct. Interacts with SNRPB, SNRPD2, SNRPD3 and SNRPE; the interaction is direct.

It localises to the nucleus. It is found in the nucleoplasm. The protein resides in the gem. Its subcellular location is the cytoplasm. Functionally, the SMN complex catalyzes the assembly of small nuclear ribonucleoproteins (snRNPs), the building blocks of the spliceosome, and thereby plays an important role in the splicing of cellular pre-mRNAs. Most spliceosomal snRNPs contain a common set of Sm proteins SNRPB, SNRPD1, SNRPD2, SNRPD3, SNRPE, SNRPF and SNRPG that assemble in a heptameric protein ring on the Sm site of the small nuclear RNA to form the core snRNP (Sm core). In the cytosol, the Sm proteins SNRPD1, SNRPD2, SNRPE, SNRPF and SNRPG are trapped in an inactive 6S pICln-Sm complex by the chaperone CLNS1A that controls the assembly of the core snRNP. To assemble core snRNPs, the SMN complex accepts the trapped 5Sm proteins from CLNS1A forming an intermediate. Binding of snRNA inside 5Sm triggers eviction of the SMN complex, thereby allowing binding of SNRPD3 and SNRPB to complete assembly of the core snRNP. This Mus musculus (Mouse) protein is Gem-associated protein 6 (Gemin6).